We begin with the raw amino-acid sequence, 152 residues long: Large ribosomal subunit protein uL13 (152 aa).

The protein belongs to the universal ribosomal protein uL13 family. In terms of assembly, part of the 50S ribosomal subunit.

This protein is one of the early assembly proteins of the 50S ribosomal subunit, although it is not seen to bind rRNA by itself. It is important during the early stages of 50S assembly. This chain is Large ribosomal subunit protein uL13, found in Neorickettsia sennetsu (strain ATCC VR-367 / Miyayama) (Ehrlichia sennetsu).